Consider the following 958-residue polypeptide: Atromentin synthetase greA (958 aa).

The interval 60 to 465 (SIQTKTFSAF…SGRIKDTVIV (406 aa)) is adenylation (A) domain. The 79-residue stretch at 597–675 (APSTETEKAL…SLANYVNALL (79 aa)) folds into the Carrier domain. Positions 602 to 672 (TEKALAKIYA…VVSSLANYVN (71 aa)) are thiolation and peptide carrier (T) domain. Ser-634 carries the O-(pantetheine 4'-phosphoryl)serine modification. The interval 698–946 (PIFFVHPGVG…MDFDHVPQFQ (249 aa)) is thioesterase (TE) domain.

It belongs to the ATP-dependent AMP-binding enzyme family.

It participates in secondary metabolite biosynthesis. An L-tyrosine:2-oxoglutarate aminotransferase and atromentin synthetase greA catalyze consecutive steps to turn over L-tyrosine into atromentin, which represents the generic precursor molecule for the entire terphenylquinone and pulvinic acid family of pigments, which are widely distributed secondary metabolites in homobasidiomycetes. The first step catalyzed by the aminotransferase converts L-tyrosine in to 4-hydroxyphenylpyruvate (4-HPP). Adenylation of two 4-HPP monomers by the greA adenylation (A) domain, covalent tethering of the monomers as a thioester and oxoester onto the greA thiolation (T) and thioesterase (TE) domains, respectively, and symmetric C-C-bond formation between two monomers catalyzed by the greA TE domain leads to atromentin. This Suillus grevillei (Larch bolete) protein is Atromentin synthetase greA (greA).